Here is a 313-residue protein sequence, read N- to C-terminus: Acetyl-coenzyme A carboxylase carboxyl transferase subunit alpha (313 aa).

The region spanning lysine 42–lysine 292 is the CoA carboxyltransferase C-terminal domain.

It belongs to the AccA family. In terms of assembly, acetyl-CoA carboxylase is a heterohexamer composed of biotin carboxyl carrier protein (AccB), biotin carboxylase (AccC) and two subunits each of ACCase subunit alpha (AccA) and ACCase subunit beta (AccD).

The protein localises to the cytoplasm. The enzyme catalyses N(6)-carboxybiotinyl-L-lysyl-[protein] + acetyl-CoA = N(6)-biotinyl-L-lysyl-[protein] + malonyl-CoA. It functions in the pathway lipid metabolism; malonyl-CoA biosynthesis; malonyl-CoA from acetyl-CoA: step 1/1. Component of the acetyl coenzyme A carboxylase (ACC) complex. First, biotin carboxylase catalyzes the carboxylation of biotin on its carrier protein (BCCP) and then the CO(2) group is transferred by the carboxyltransferase to acetyl-CoA to form malonyl-CoA. This Rhizorhabdus wittichii (strain DSM 6014 / CCUG 31198 / JCM 15750 / NBRC 105917 / EY 4224 / RW1) (Sphingomonas wittichii) protein is Acetyl-coenzyme A carboxylase carboxyl transferase subunit alpha.